Here is a 399-residue protein sequence, read N- to C-terminus: Tyrosine--tRNA ligase 2 (399 aa).

Residues proline 42–histidine 51 carry the 'HIGH' region motif. A 'KMSKS' region motif is present at residues lysine 226–serine 230. ATP is bound at residue lysine 229. The 61-residue stretch at methionine 336 to leucine 396 folds into the S4 RNA-binding domain.

Belongs to the class-I aminoacyl-tRNA synthetase family. TyrS type 2 subfamily. Homodimer.

Its subcellular location is the cytoplasm. It carries out the reaction tRNA(Tyr) + L-tyrosine + ATP = L-tyrosyl-tRNA(Tyr) + AMP + diphosphate + H(+). Catalyzes the attachment of tyrosine to tRNA(Tyr) in a two-step reaction: tyrosine is first activated by ATP to form Tyr-AMP and then transferred to the acceptor end of tRNA(Tyr). This is Tyrosine--tRNA ligase 2 from Pseudomonas aeruginosa (strain ATCC 15692 / DSM 22644 / CIP 104116 / JCM 14847 / LMG 12228 / 1C / PRS 101 / PAO1).